The primary structure comprises 946 residues: Bifunctional lysine-specific demethylase and histidyl-hydroxylase NO66 (946 aa).

The disordered stretch occupies residues 14–435 (YRGSATSKNY…TSAASKKNTV (422 aa)). Composition is skewed to polar residues over residues 17–28 (SATSKNYVQKGT) and 37–46 (AKNNNRNLAS). The segment covering 59 to 73 (SGSYSDGDNGSSSSS) has biased composition (low complexity). Polar residues predominate over residues 99-110 (TLNNHSSQSSPE). Residues 117–128 (ESLKRRNDEAEG) are compositionally biased toward basic and acidic residues. The span at 169-186 (TLNSHSSQSSPETPANTR) shows a compositional bias: polar residues. Over residues 187–198 (ESLKRRTDEAEG) the composition is skewed to basic and acidic residues. Over residues 239 to 256 (TLNSHSYQSSPETPANTR) the composition is skewed to polar residues. Over residues 257–268 (ESLKRRTDEAEG) the composition is skewed to basic and acidic residues. The residue at position 309 (Thr-309) is a Phosphothreonine. Residues 309–327 (TLNSHSSQSSPETPANTRE) show a composition bias toward polar residues. Residues 328-338 (SLNRRNYEAEG) are compositionally biased toward basic and acidic residues. Ser-339 is subject to Phosphoserine. Polar residues predominate over residues 379-397 (TLNSHSSQSSPETPANTRE). Residues 398–408 (SLNRRNYEAEG) show a composition bias toward basic and acidic residues. Over residues 416–433 (RTSSTPVGQSTSAASKKN) the composition is skewed to polar residues. The JmjC domain maps to 606–742 (NPSSYLVQLR…NLMEKLMPLV (137 aa)). Positions 646, 648, and 708 each coordinate Fe cation.

The protein belongs to the ROX family. NO66 subfamily. It depends on Fe(2+) as a cofactor.

It localises to the nucleus. It catalyses the reaction N(6),N(6)-dimethyl-L-lysyl(36)-[histone H3] + 2 2-oxoglutarate + 2 O2 = L-lysyl(36)-[histone H3] + 2 formaldehyde + 2 succinate + 2 CO2. Its function is as follows. Oxygenase that can act as both a histone lysine demethylase and a ribosomal histidine hydroxylase. Specifically demethylates 'Lys-4' (H3K4me) and 'Lys-36' (H3K36me) of histone H3, thereby playing a central role in histone code. The chain is Bifunctional lysine-specific demethylase and histidyl-hydroxylase NO66 from Drosophila pseudoobscura pseudoobscura (Fruit fly).